Consider the following 683-residue polypeptide: Boron transporter 4 (683 aa).

The Cytoplasmic segment spans residues 1–38 (MEEERVDSSKRLFRGIVADLRGRALCYKEDWVAGLRSG). Residues 39 to 59 (FGILAPTTYIFFASALPVIAF) traverse the membrane as a helical segment. The Extracellular segment spans residues 60–80 (GEQLSRDTEGALSTVETLAST). The helical transmembrane segment at 81-101 (ALCGVIHSILGGQPLLILGVA) threads the bilayer. The Cytoplasmic portion of the chain corresponds to 102–126 (EPTVLMYVYLYNFAIGRPELGKQLY). The chain crosses the membrane as a helical span at residues 127-147 (LAWAAWVCVWTALLLFVMAIL). Residues 148-160 (NTADIINRFTRVA) are Extracellular-facing. A helical transmembrane segment spans residues 161-181 (GELFGMLISVLFIQQAIKGMV). Over 182-200 (SEFGMPKDEDSKLEKYKFE) the chain is Cytoplasmic. The chain crosses the membrane as a helical span at residues 201–221 (WLYTNGLLGLIFTFGLLYTAL). The Extracellular segment spans residues 222-238 (KSRKARSWRYGTGWYRS). The chain crosses the membrane as a helical span at residues 239 to 259 (FIADYGVPLMVVVWTALSFST). The Cytoplasmic portion of the chain corresponds to 260–294 (PSKLPSGVPRRLFSPLPWDSPSLSHWTVIKDMGKV). Residues 295-315 (SPGYIFAAFIPALMIAGLYFF) traverse the membrane as a helical segment. The Extracellular segment spans residues 316-335 (DHSVASQLAQQKEFNLKKPS). The helical transmembrane segment at 336 to 356 (AYHYDILLLGFMTLICGLLGL) threads the bilayer. Over 357-477 (PPSNGVLPQS…EQRVSNLLQS (121 aa)) the chain is Cytoplasmic. The chain crosses the membrane as a helical span at residues 478–498 (LLVAGAVLAMPAIKLIPTSIL). At 499–565 (WGYFAYMAID…QIFYFGLCYG (67 aa)) the chain is on the extracellular side. The chain crosses the membrane as a helical span at residues 566–586 (VTWIPVAGIMFPVPFFLLIAI). Residues 587–683 (RQYILPKLFN…GDGDMSTTRE (97 aa)) lie on the Cytoplasmic side of the membrane. Disordered regions lie at residues 617–638 (NPLE…GDAE) and 661–683 (KGNQ…TTRE).

Belongs to the anion exchanger (TC 2.A.31.3) family. In terms of tissue distribution, expressed in the distal sides of epidermal cells in the elongation zone of roots.

The protein resides in the membrane. In terms of biological role, efflux-type boron transporter polarly localized in roots. Boron is essential for maintaining the integrity of plants cell walls. This is Boron transporter 4 (BOR4) from Arabidopsis thaliana (Mouse-ear cress).